The following is a 173-amino-acid chain: Co-chaperone protein HscB (173 aa).

The J domain maps to 2–74 (DYFTLLGMPN…LSRAEYMLSL (73 aa)).

It belongs to the HscB family. Interacts with HscA and stimulates its ATPase activity. Interacts with IscU.

Functionally, co-chaperone involved in the maturation of iron-sulfur cluster-containing proteins. Seems to help targeting proteins to be folded toward HscA. The chain is Co-chaperone protein HscB from Proteus mirabilis (strain HI4320).